The chain runs to 229 residues: 2-C-methyl-D-erythritol 4-phosphate cytidylyltransferase (229 aa).

It belongs to the IspD/TarI cytidylyltransferase family. IspD subfamily. Homodimer.

The enzyme catalyses 2-C-methyl-D-erythritol 4-phosphate + CTP + H(+) = 4-CDP-2-C-methyl-D-erythritol + diphosphate. The protein operates within isoprenoid biosynthesis; isopentenyl diphosphate biosynthesis via DXP pathway; isopentenyl diphosphate from 1-deoxy-D-xylulose 5-phosphate: step 2/6. Its function is as follows. Catalyzes the formation of 4-diphosphocytidyl-2-C-methyl-D-erythritol from CTP and 2-C-methyl-D-erythritol 4-phosphate (MEP). The protein is 2-C-methyl-D-erythritol 4-phosphate cytidylyltransferase of Wigglesworthia glossinidia brevipalpis.